The sequence spans 273 residues: Eukaryotic translation initiation factor 3 subunit G-2 (273 aa).

Residues 168-192 (PPFMKDGGGGSGGKNWGRGRDRDDS) are disordered. A compositionally biased stretch (gly residues) spans 173–183 (DGGGGSGGKNW). The RRM domain occupies 193 to 271 (SAVRISNLSE…LILCVEWSKP (79 aa)).

Belongs to the eIF-3 subunit G family. Component of the eukaryotic translation initiation factor 3 (eIF-3) complex. The eIF-3 complex interacts with pix.

It is found in the cytoplasm. RNA-binding component of the eukaryotic translation initiation factor 3 (eIF-3) complex, which is involved in protein synthesis of a specialized repertoire of mRNAs and, together with other initiation factors, stimulates binding of mRNA and methionyl-tRNAi to the 40S ribosome. The eIF-3 complex specifically targets and initiates translation of a subset of mRNAs involved in cell proliferation. This subunit can bind 18S rRNA. The sequence is that of Eukaryotic translation initiation factor 3 subunit G-2 from Drosophila erecta (Fruit fly).